Consider the following 63-residue polypeptide: Large ribosomal subunit protein uL29 (63 aa).

The protein belongs to the universal ribosomal protein uL29 family.

The chain is Large ribosomal subunit protein uL29 from Vibrio vulnificus (strain CMCP6).